The primary structure comprises 178 residues: Caveolin-1 (178 aa).

S2 bears the N-acetylserine mark. S2 bears the Phosphoserine mark. A required for homooligomerization region spans residues 2–94; it reads SGGKYVDSEG…WKASFTTFTV (93 aa). Over 2 to 104 the chain is Cytoplasmic; that stretch reads SGGKYVDSEG…TKYWFYRLLS (103 aa). Position 5 is an N6-acetyllysine; alternate (K5). A Glycyl lysine isopeptide (Lys-Gly) (interchain with G-Cter in ubiquitin); alternate cross-link involves residue K5. Y6 is subject to Phosphotyrosine. At S9 the chain carries Phosphoserine. Position 14 is a phosphotyrosine; by ABL1 (Y14). Position 25 is a phosphotyrosine (Y25). Glycyl lysine isopeptide (Lys-Gly) (interchain with G-Cter in ubiquitin) cross-links involve residues K26, K30, K39, K47, and K57. The segment at 82-94 is interaction with CAVIN3; sequence DGIWKASFTTFTV. The segment at residues 105–125 is an intramembrane region (helical); the sequence is ALFGIPMALIWGIYFAILSFL. The Cytoplasmic segment spans residues 126-178; the sequence is HIWAVVPCIKSFLIEIQCISRVYSIYVHTFCDPLFEAIGKIFSNIRINMQKEI. Positions 131–142 are interacts with SPRY1, SPRY2, SPRY3 and SPRY4; that stretch reads VPCIKSFLIEIQ. 3 S-palmitoyl cysteine lipidation sites follow: C133, C143, and C156. Residues 149-160 are interacts with SPRY1, SPRY2, and SPRY4; it reads SIYVHTFCDPLF. The interval 167–178 is interacts with SPRY1, SPRY2, SPRY3 and SPRY4; that stretch reads FSNIRINMQKEI.

Belongs to the caveolin family. In terms of assembly, homooligomer. Interacts (via the N-terminus) with DPP4; the interaction is direct. Forms a stable heterooligomeric complex with CAV2 that targets to lipid rafts and drives caveolae formation. Interacts with PACSIN2; this interaction induces membrane tubulation. Interacts with BMX, BTK, CTNNB1, CDH1, GLIPR2, JUP, NOSTRIN, SNAP25 and STX1A. Interacts with SLC7A9. Interacts with TGFBR1. Interacts with CAVIN3 (via leucine-zipper domain) in a cholesterol-sensitive manner. Interacts with CAVIN1. Interacts with EHD2 in a cholesterol-dependent manner. Forms a ternary complex with UBXN6 and VCP; mediates CAV1 targeting to lysosomes for degradation. Interacts with ABCG1; this interaction regulates ABCG1-mediated cholesterol efflux. Interacts with NEU3; this interaction enhances NEU3 sialidase activity within caveola. Interacts (via C-terminus) with SPRY1, SPRY2 (via C-terminus), SPRY3, and SPRY4. Phosphorylated at Tyr-14 by ABL1 in response to oxidative stress. In terms of processing, ubiquitinated. Undergo monoubiquitination and multi- and/or polyubiquitination. Monoubiquitination of N-terminal lysines promotes integration in a ternary complex with UBXN6 and VCP which promotes oligomeric CAV1 targeting to lysosomes for degradation. Ubiquitinated by ZNRF1; leading to degradation and modulation of the TLR4-mediated immune response.

It is found in the golgi apparatus membrane. The protein resides in the cell membrane. It localises to the membrane. The protein localises to the caveola. Its subcellular location is the membrane raft. May act as a scaffolding protein within caveolar membranes. Forms a stable heterooligomeric complex with CAV2 that targets to lipid rafts and drives caveolae formation. Mediates the recruitment of CAVIN proteins (CAVIN1/2/3/4) to the caveolae. Interacts directly with G-protein alpha subunits and can functionally regulate their activity. Involved in the costimulatory signal essential for T-cell receptor (TCR)-mediated T-cell activation. Its binding to DPP4 induces T-cell proliferation and NF-kappa-B activation in a T-cell receptor/CD3-dependent manner. Recruits CTNNB1 to caveolar membranes and may regulate CTNNB1-mediated signaling through the Wnt pathway. Negatively regulates TGFB1-mediated activation of SMAD2/3 by mediating the internalization of TGFBR1 from membrane rafts leading to its subsequent degradation. Binds 20(S)-hydroxycholesterol (20(S)-OHC). The chain is Caveolin-1 (CAV1) from Otolemur garnettii (Small-eared galago).